A 702-amino-acid chain; its full sequence is Ribosomal RNA large subunit methyltransferase K/L (702 aa).

Residues 43–154 (LVYQSLMWSR…KETASIALDL (112 aa)) enclose the THUMP domain.

It belongs to the methyltransferase superfamily. RlmKL family.

Its subcellular location is the cytoplasm. The enzyme catalyses guanosine(2445) in 23S rRNA + S-adenosyl-L-methionine = N(2)-methylguanosine(2445) in 23S rRNA + S-adenosyl-L-homocysteine + H(+). It carries out the reaction guanosine(2069) in 23S rRNA + S-adenosyl-L-methionine = N(2)-methylguanosine(2069) in 23S rRNA + S-adenosyl-L-homocysteine + H(+). Its function is as follows. Specifically methylates the guanine in position 2445 (m2G2445) and the guanine in position 2069 (m7G2069) of 23S rRNA. The chain is Ribosomal RNA large subunit methyltransferase K/L from Escherichia coli (strain K12 / DH10B).